Reading from the N-terminus, the 148-residue chain is Deoxyuridine 5'-triphosphate nucleotidohydrolase (148 aa).

Residues R67–G69, N80, L84–D86, and M94 contribute to the substrate site.

The protein belongs to the dUTPase family. Mg(2+) serves as cofactor.

It catalyses the reaction dUTP + H2O = dUMP + diphosphate + H(+). It functions in the pathway pyrimidine metabolism; dUMP biosynthesis; dUMP from dCTP (dUTP route): step 2/2. Functionally, this enzyme is involved in nucleotide metabolism: it produces dUMP, the immediate precursor of thymidine nucleotides and it decreases the intracellular concentration of dUTP so that uracil cannot be incorporated into DNA. This Paraburkholderia phytofirmans (strain DSM 17436 / LMG 22146 / PsJN) (Burkholderia phytofirmans) protein is Deoxyuridine 5'-triphosphate nucleotidohydrolase.